Reading from the N-terminus, the 433-residue chain is Peptidoglycan DD-endopeptidase ShyC (433 aa).

Residues 10–30 (WLHRVLITAFSAIIVFAIFFL) traverse the membrane as a helical segment. His299, Asp303, and His380 together coordinate Zn(2+).

This sequence belongs to the peptidase M23B family. Zn(2+) is required as a cofactor.

The protein resides in the cell inner membrane. It functions in the pathway cell wall degradation; peptidoglycan degradation. Reduced activity in 0.5 mM EDTA and a complete loss of activity at higher EDTA concentrations. In terms of biological role, cell wall peptidoglycan (PG) DD-endopeptidase. Hydrolyzes peptide cross-links which covalently connect adjacent PG strands probably to allow insertion of new glycans and thus cell wall expansion. Degrades purified whole PG sacculi in vitro. The polypeptide is Peptidoglycan DD-endopeptidase ShyC (Vibrio cholerae serotype O1 (strain ATCC 39315 / El Tor Inaba N16961)).